An 82-amino-acid polypeptide reads, in one-letter code: UPF0248 protein Mevan_1298 (82 aa).

It belongs to the UPF0248 family.

This chain is UPF0248 protein Mevan_1298, found in Methanococcus vannielii (strain ATCC 35089 / DSM 1224 / JCM 13029 / OCM 148 / SB).